The sequence spans 352 residues: Small ribosomal subunit biogenesis GTPase RsgA (352 aa).

Residues 1 to 21 are compositionally biased toward basic residues; the sequence is MKKNKLSKNQHRRIQAHHQYR. The interval 1–38 is disordered; it reads MKKNKLSKNQHRRIQAHHQYRLHPTSLTDDKNNQLDDA. The 163-residue stretch at 116–278 folds into the CP-type G domain; the sequence is FYDGIKPMAA…LIDSPGIREF (163 aa). GTP contacts are provided by residues 164-167 and 218-226; these read NKID and GQSGVGKSS. Residues C302, C307, H309, and C315 each coordinate Zn(2+).

This sequence belongs to the TRAFAC class YlqF/YawG GTPase family. RsgA subfamily. As to quaternary structure, monomer. Associates with 30S ribosomal subunit, binds 16S rRNA. Zn(2+) serves as cofactor.

The protein resides in the cytoplasm. One of several proteins that assist in the late maturation steps of the functional core of the 30S ribosomal subunit. Helps release RbfA from mature subunits. May play a role in the assembly of ribosomal proteins into the subunit. Circularly permuted GTPase that catalyzes slow GTP hydrolysis, GTPase activity is stimulated by the 30S ribosomal subunit. In Hamiltonella defensa subsp. Acyrthosiphon pisum (strain 5AT), this protein is Small ribosomal subunit biogenesis GTPase RsgA.